A 454-amino-acid polypeptide reads, in one-letter code: O-phospho-L-seryl-tRNA:Cys-tRNA synthase 2 (454 aa).

Pyridoxal 5'-phosphate is bound by residues 146 to 147, asparagine 251, and 274 to 276; these read AR and SGH. Lysine 277 is modified (N6-(pyridoxal phosphate)lysine).

The protein belongs to the SepCysS family. As to quaternary structure, homodimer. Interacts with SepRS. Pyridoxal 5'-phosphate serves as cofactor.

It catalyses the reaction O-phospho-L-seryl-tRNA(Cys) + hydrogen sulfide + H(+) = L-cysteinyl-tRNA(Cys) + phosphate. Converts O-phospho-L-seryl-tRNA(Cys) (Sep-tRNA(Cys)) to L-cysteinyl-tRNA(Cys) (Cys-tRNA(Cys)). This Methanoregula boonei (strain DSM 21154 / JCM 14090 / 6A8) protein is O-phospho-L-seryl-tRNA:Cys-tRNA synthase 2.